Here is a 151-residue protein sequence, read N- to C-terminus: Ribosome maturation factor RimP (151 aa).

Belongs to the RimP family.

The protein resides in the cytoplasm. Its function is as follows. Required for maturation of 30S ribosomal subunits. This Vibrio cholerae serotype O1 (strain ATCC 39541 / Classical Ogawa 395 / O395) protein is Ribosome maturation factor RimP.